A 99-amino-acid chain; its full sequence is Nucleoid-associated protein LCABL_24440 (99 aa).

The protein belongs to the YbaB/EbfC family. In terms of assembly, homodimer.

Its subcellular location is the cytoplasm. The protein resides in the nucleoid. In terms of biological role, binds to DNA and alters its conformation. May be involved in regulation of gene expression, nucleoid organization and DNA protection. The sequence is that of Nucleoid-associated protein LCABL_24440 from Lacticaseibacillus casei (strain BL23) (Lactobacillus casei).